A 423-amino-acid chain; its full sequence is ATP-citrate synthase alpha chain protein 2 (423 aa).

Positions 343, 345, and 376 each coordinate citrate.

Belongs to the succinate/malate CoA ligase beta subunit family. In terms of assembly, heterooctamer of 4 alpha and 4 beta chains.

It is found in the cytoplasm. Its subcellular location is the cytosol. The enzyme catalyses oxaloacetate + acetyl-CoA + ADP + phosphate = citrate + ATP + CoA. In terms of biological role, ATP citrate-lyase is the primary enzyme responsible for the synthesis of cytosolic acetyl-CoA, used for the elongation of fatty acids and biosynthesis of isoprenoids, flavonoids and malonated derivatives. May supply substrate to the cytosolic acetyl-CoA carboxylase, which generates the malonyl-CoA used for the synthesis of a multitude of compounds, including very long chain fatty acids and flavonoids. In contrast to all known animal ACL enzymes having a homomeric structure, plant ACLs are composed of alpha and beta chains. In Oryza sativa subsp. japonica (Rice), this protein is ATP-citrate synthase alpha chain protein 2 (ACLA-2).